Here is a 1135-residue protein sequence, read N- to C-terminus: Phytochrome C (1135 aa).

Polar residues predominate over residues 1–11 (MSSPLNNRGTC). The disordered stretch occupies residues 1–26 (MSSPLNNRGTCSRSSSARSRHSARVV). Residues 216–399 (NLSLLCDVLV…VFGIQLNKEV (184 aa)) enclose the GAF domain. A phytochromobilin-binding site is contributed by cysteine 321. PAS domains lie at 618-688 (VTNE…LQGI) and 748-822 (IQGD…TKLS). Residues 902 to 1122 (YIHQELRNPL…IILIEFPVAQ (221 aa)) enclose the Histidine kinase domain.

The protein belongs to the phytochrome family. As to quaternary structure, homodimer. Post-translationally, contains one covalently linked phytochromobilin chromophore.

Functionally, regulatory photoreceptor which exists in two forms that are reversibly interconvertible by light: the Pr form that absorbs maximally in the red region of the spectrum and the Pfr form that absorbs maximally in the far-red region. Photoconversion of Pr to Pfr induces an array of morphogenic responses, whereas reconversion of Pfr to Pr cancels the induction of those responses. Pfr controls the expression of a number of nuclear genes including those encoding the small subunit of ribulose-bisphosphate carboxylase, chlorophyll A/B binding protein, protochlorophyllide reductase, rRNA, etc. It also controls the expression of its own gene(s) in a negative feedback fashion. This Sorghum bicolor (Sorghum) protein is Phytochrome C (PHYC).